We begin with the raw amino-acid sequence, 771 residues long: Receptor like protein 22 (771 aa).

An N-terminal signal peptide occupies residues Met-1 to Ala-20. Over Leu-21 to Ala-729 the chain is Extracellular. 6 N-linked (GlcNAc...) asparagine glycosylation sites follow: Asn-46, Asn-58, Asn-80, Asn-93, Asn-134, and Asn-158. LRR repeat units follow at residues Leu-86–Gln-110, Asn-112–Leu-135, Thr-136–Leu-159, Thr-160–Met-183, Phe-185–Ser-206, Ser-207–Leu-230, Asn-232–Pro-254, Leu-255–Lys-281, Met-283–Leu-303, Lys-304–Leu-327, Leu-329–Val-350, and Asn-353–Ile-377. Asn-204 carries an N-linked (GlcNAc...) asparagine glycan. Asn-242 carries N-linked (GlcNAc...) asparagine glycosylation. Asn-292 carries an N-linked (GlcNAc...) asparagine glycan. Residues Asn-337, Asn-344, Asn-353, Asn-379, Asn-384, Asn-397, Asn-410, Asn-421, Asn-466, and Asn-481 are each glycosylated (N-linked (GlcNAc...) asparagine). The stretch at Ile-378–Asn-397 is one LRR 13; degenerate repeat. LRR repeat units lie at residues Arg-398–Met-419, Gly-420–Gly-443, Leu-445–Cys-467, Phe-469–Leu-491, Pro-492–Ser-516, Phe-519–Asn-543, Leu-588–Leu-612, Lys-613–Val-636, Thr-637–Leu-660, and Tyr-662–Gly-685. Asn-543 carries an N-linked (GlcNAc...) asparagine glycan. Residues Asn-619, Asn-622, and Asn-635 are each glycosylated (N-linked (GlcNAc...) asparagine). A helical membrane pass occupies residues Ala-730–Leu-750. At Tyr-751–Pro-771 the chain is on the cytoplasmic side.

It belongs to the RLP family.

It is found in the cell membrane. This is Receptor like protein 22 from Arabidopsis thaliana (Mouse-ear cress).